The chain runs to 416 residues: Serine hydroxymethyltransferase (416 aa).

Residues Leu-121 and 125-127 (GHL) each bind (6S)-5,6,7,8-tetrahydrofolate. Lys-230 bears the N6-(pyridoxal phosphate)lysine mark.

This sequence belongs to the SHMT family. In terms of assembly, homodimer. Requires pyridoxal 5'-phosphate as cofactor.

It localises to the cytoplasm. The enzyme catalyses (6R)-5,10-methylene-5,6,7,8-tetrahydrofolate + glycine + H2O = (6S)-5,6,7,8-tetrahydrofolate + L-serine. It functions in the pathway one-carbon metabolism; tetrahydrofolate interconversion. It participates in amino-acid biosynthesis; glycine biosynthesis; glycine from L-serine: step 1/1. Catalyzes the reversible interconversion of serine and glycine with tetrahydrofolate (THF) serving as the one-carbon carrier. This reaction serves as the major source of one-carbon groups required for the biosynthesis of purines, thymidylate, methionine, and other important biomolecules. Also exhibits THF-independent aldolase activity toward beta-hydroxyamino acids, producing glycine and aldehydes, via a retro-aldol mechanism. The sequence is that of Serine hydroxymethyltransferase from Nitrosomonas eutropha (strain DSM 101675 / C91 / Nm57).